A 134-amino-acid polypeptide reads, in one-letter code: Large-conductance mechanosensitive channel (134 aa).

The next 2 membrane-spanning stretches (helical) occupy residues 16-36 (VIDLAVGVVIGAAFGKIVTAL) and 84-104 (INTLIQFVIVAFAIFLVIKVI).

Belongs to the MscL family. In terms of assembly, homopentamer.

Its subcellular location is the cell inner membrane. Functionally, channel that opens in response to stretch forces in the membrane lipid bilayer. May participate in the regulation of osmotic pressure changes within the cell. The chain is Large-conductance mechanosensitive channel from Stenotrophomonas maltophilia (strain R551-3).